Here is a 129-residue protein sequence, read N- to C-terminus: uncharacterized protein (129 aa).

Residues 6–129 form the VOC domain; that stretch reads QVHHIAIIAT…DGLPLELYEQ (124 aa). The a divalent metal cation site is built by His-9, Glu-57, His-78, and Glu-125.

This sequence to B.subtilis YwkD.

This is an uncharacterized protein from Escherichia coli (strain K12).